Reading from the N-terminus, the 347-residue chain is (RS)-norcoclaurine 6-O-methyltransferase (347 aa).

5 residues coordinate S-adenosyl-L-methionine: glycine 192, aspartate 215, aspartate 235, methionine 236, and lysine 249. Catalysis depends on histidine 253, which acts as the Proton acceptor.

This sequence belongs to the class I-like SAM-binding methyltransferase superfamily. Cation-independent O-methyltransferase family. COMT subfamily. As to quaternary structure, homodimer.

The enzyme catalyses norcoclaurine + S-adenosyl-L-methionine = coclaurine + S-adenosyl-L-homocysteine + H(+). It functions in the pathway alkaloid biosynthesis; (S)-reticuline biosynthesis; (S)-reticuline from (S)-norcoclaurine: step 1/4. Functionally, catalyzes the transfer of the S-methyl group of S-adenosyl-L-methionine (AdoMet) to the 6-hydroxyl group of norcoclaurine to form coclaurine. The sequence is that of (RS)-norcoclaurine 6-O-methyltransferase from Coptis japonica (Japanese goldthread).